The primary structure comprises 142 residues: Hemoglobin subunit alpha (142 aa).

The Globin domain maps to 2–142; sequence VLSPADKTNV…VSTVLTSKYR (141 aa). Phosphoserine is present on Ser4. N6-succinyllysine is present on Lys8. A Phosphothreonine modification is found at Thr9. Lys12 is modified (N6-succinyllysine). Lys17 is subject to N6-acetyllysine; alternate. At Lys17 the chain carries N6-succinyllysine; alternate. Position 25 is a phosphotyrosine (Tyr25). The residue at position 36 (Ser36) is a Phosphoserine. At Lys41 the chain carries N6-succinyllysine. Position 50 is a phosphoserine (Ser50). Residue His59 participates in O2 binding. Residue His88 coordinates heme b. A Phosphoserine modification is found at Ser103. Thr109 is subject to Phosphothreonine. Ser125 and Ser132 each carry phosphoserine. Phosphothreonine is present on residues Thr135 and Thr138. Ser139 bears the Phosphoserine mark.

It belongs to the globin family. In terms of assembly, heterotetramer of two alpha chains and two beta chains in adult hemoglobin A (HbA); two alpha chains and two delta chains in adult hemoglobin A2 (HbA2); two alpha chains and two epsilon chains in early embryonic hemoglobin Gower-2; two alpha chains and two gamma chains in fetal hemoglobin F (HbF). Red blood cells.

In terms of biological role, involved in oxygen transport from the lung to the various peripheral tissues. Functionally, hemopressin acts as an antagonist peptide of the cannabinoid receptor CNR1. Hemopressin-binding efficiently blocks cannabinoid receptor CNR1 and subsequent signaling. This is Hemoglobin subunit alpha (HBA1) from Pan paniscus (Pygmy chimpanzee).